A 444-amino-acid chain; its full sequence is Methylenetetrahydrofolate--tRNA-(uracil-5-)-methyltransferase TrmFO (444 aa).

Position 10–15 (10–15) interacts with FAD; sequence GAGLAG.

This sequence belongs to the MnmG family. TrmFO subfamily. FAD is required as a cofactor.

Its subcellular location is the cytoplasm. It carries out the reaction uridine(54) in tRNA + (6R)-5,10-methylene-5,6,7,8-tetrahydrofolate + NADH + H(+) = 5-methyluridine(54) in tRNA + (6S)-5,6,7,8-tetrahydrofolate + NAD(+). It catalyses the reaction uridine(54) in tRNA + (6R)-5,10-methylene-5,6,7,8-tetrahydrofolate + NADPH + H(+) = 5-methyluridine(54) in tRNA + (6S)-5,6,7,8-tetrahydrofolate + NADP(+). Its function is as follows. Catalyzes the folate-dependent formation of 5-methyl-uridine at position 54 (M-5-U54) in all tRNAs. This is Methylenetetrahydrofolate--tRNA-(uracil-5-)-methyltransferase TrmFO from Streptococcus pneumoniae (strain Taiwan19F-14).